We begin with the raw amino-acid sequence, 137 residues long: Transcription antitermination protein NusB (137 aa).

This sequence belongs to the NusB family.

Its function is as follows. Involved in transcription antitermination. Required for transcription of ribosomal RNA (rRNA) genes. Binds specifically to the boxA antiterminator sequence of the ribosomal RNA (rrn) operons. In Actinobacillus pleuropneumoniae serotype 5b (strain L20), this protein is Transcription antitermination protein NusB.